Here is a 483-residue protein sequence, read N- to C-terminus: Protein LMBR1L (483 aa).

At 1 to 21 (MEVNQDVSVREQIFHDWVREC) the chain is on the extracellular side. A helical transmembrane segment spans residues 22-42 (IICSLLFSTLYLLSYIVITKF). Residues 43-60 (KKHADFATVDVEDAAVNR) lie on the Cytoplasmic side of the membrane. A helical transmembrane segment spans residues 61 to 81 (IALWMCTFTLAVSVGAVLLLP). The Extracellular portion of the chain corresponds to 82 to 112 (FSIISNEVLLSVPHNYYIQWLNGSLIHGLWN). Residues 113 to 133 (LVFLFSNLSLVFLMPFAYLFT) traverse the membrane as a helical segment. At 134-153 (EAEGFAGSKKGVMSRVYETT) the chain is on the cytoplasmic side. A helical transmembrane segment spans residues 154–174 (VVLLLLTLLVFGIVWVASAIF). Residues 175-194 (DDDSAGRESLYDLWEYYLPY) lie on the Extracellular side of the membrane. Residues 195-215 (LYSGISLFGVLLLLLCTPFGL) form a helical membrane-spanning segment. The Cytoplasmic portion of the chain corresponds to 216-294 (SRMFSVTGNL…RRRASPWQRN (79 aa)). Residues 295–315 (LVYPLAMLLLLALTGITVLIV) traverse the membrane as a helical segment. Topologically, residues 316–342 (CVNVLELLIDEAAMPKGIQGSQLGKVS) are extracellular. The helical transmembrane segment at 343 to 363 (FSVFGSFGAAVQVILIFYLMA) threads the bilayer. Topologically, residues 364-386 (SSVVGFYSSPLFIQLLPQKQNTP) are cytoplasmic. A helical transmembrane segment spans residues 387 to 407 (MTKIIGNCVSLLILSSALPVF). Residues 408 to 429 (SRTLGITRFDLLGDFGRFNWLG) lie on the Extracellular side of the membrane. The helical transmembrane segment at 430–450 (NFYLILLYNMMFAGLATLCLV) threads the bilayer. At 451-483 (KKFTWAVQAELIRAFGLDRLPLSVKKIRSQGKA) the chain is on the cytoplasmic side.

The protein belongs to the LIMR family. Dimer. Can also form higher oligomers.

It is found in the cell membrane. The protein resides in the endoplasmic reticulum membrane. In terms of biological role, may play a role in lymphocyte development by negatively regulating the canonical Wnt signaling pathway. May act as a LCN1 receptor. The protein is Protein LMBR1L (lmbr1l) of Xenopus laevis (African clawed frog).